The sequence spans 303 residues: Protoporphyrin uptake protein 1 (303 aa).

Topologically, residues 1 to 18 (MSTTDSGFVLYHYTPSKA) are extracellular. A helical membrane pass occupies residues 19-39 (AAIVFVVLFIIMTVIFAVQTL). Over 40-76 (YAARKSSKALKNNPFESSDDKVDSLEDAEYKQLKITP) the chain is Cytoplasmic. A helical transmembrane segment spans residues 77–97 (TVFAFIPFFTGCIMEAVGYIG). The Extracellular portion of the chain corresponds to 98 to 111 (RALSSSNPERTTPY). A helical transmembrane segment spans residues 112–132 (IIQSVLLLVAPALIAATIYMI). At 133–154 (FGRLLHVMRCQSLILISARFGT) the chain is on the cytoplasmic side. The chain crosses the membrane as a helical span at residues 155 to 175 (TFFVVGDVFSFFLQAAGGGLM). The Extracellular segment spans residues 176–183 (SKAGSTKT). A helical transmembrane segment spans residues 184–204 (GSGLITAGLFVQVIFFGFFII). Topologically, residues 205 to 226 (NEIRFTVNVKRRCLFYEDISRK) are cytoplasmic. The helical transmembrane segment at 227-247 (WIFVNATLLLSSMLILLRSIV) threads the bilayer. Residues 248 to 264 (RIVEFIQGFNGYIISHE) are Extracellular-facing. The chain crosses the membrane as a helical span at residues 265-285 (YFIYVFDAVPMLLVIIAFSVG). Residues 286-303 (SFFGNVFDVIKECQTLSN) are Cytoplasmic-facing.

It belongs to the lipid-translocating exporter (LTE) (TC 9.A.26.1) family. In terms of processing, N-glycosylated.

The protein localises to the cell membrane. Its function is as follows. Involved in inducible protoporphyrin IX influx and heme efflux. This Saccharomyces cerevisiae (strain ATCC 204508 / S288c) (Baker's yeast) protein is Protoporphyrin uptake protein 1 (PUG1).